Here is a 187-residue protein sequence, read N- to C-terminus: UPF0301 protein YqgE (187 aa).

This sequence belongs to the UPF0301 (AlgH) family.

The sequence is that of UPF0301 protein YqgE from Shigella boydii serotype 4 (strain Sb227).